Consider the following 219-residue polypeptide: Membrin-12 (219 aa).

Ala2 is modified (N-acetylalanine). Residues 2–197 (ASGTVGGLSE…LIERRNRVDT (196 aa)) are Cytoplasmic-facing. A helical; Anchor for type IV membrane protein transmembrane segment spans residues 198 to 215 (WIKYAGMIATLVILYLFI). The Vesicular portion of the chain corresponds to 216–219 (RWTR).

The protein belongs to the GOSR2 family.

It is found in the golgi apparatus membrane. Involved in transport of proteins from the cis/medial-Golgi to the trans-Golgi network. The sequence is that of Membrin-12 (MEMB12) from Arabidopsis thaliana (Mouse-ear cress).